We begin with the raw amino-acid sequence, 673 residues long: Glycine--tRNA ligase beta subunit (673 aa).

It belongs to the class-II aminoacyl-tRNA synthetase family. In terms of assembly, tetramer of two alpha and two beta subunits.

The protein localises to the cytoplasm. It carries out the reaction tRNA(Gly) + glycine + ATP = glycyl-tRNA(Gly) + AMP + diphosphate. This is Glycine--tRNA ligase beta subunit from Lactococcus lactis subsp. lactis (strain IL1403) (Streptococcus lactis).